The sequence spans 453 residues: Exodeoxyribonuclease 7 large subunit (453 aa).

The protein belongs to the XseA family. In terms of assembly, heterooligomer composed of large and small subunits.

The protein resides in the cytoplasm. The enzyme catalyses Exonucleolytic cleavage in either 5'- to 3'- or 3'- to 5'-direction to yield nucleoside 5'-phosphates.. Functionally, bidirectionally degrades single-stranded DNA into large acid-insoluble oligonucleotides, which are then degraded further into small acid-soluble oligonucleotides. This chain is Exodeoxyribonuclease 7 large subunit, found in Rickettsia typhi (strain ATCC VR-144 / Wilmington).